Reading from the N-terminus, the 236-residue chain is 2-C-methyl-D-erythritol 4-phosphate cytidylyltransferase (236 aa).

It belongs to the IspD/TarI cytidylyltransferase family. IspD subfamily.

It carries out the reaction 2-C-methyl-D-erythritol 4-phosphate + CTP + H(+) = 4-CDP-2-C-methyl-D-erythritol + diphosphate. It functions in the pathway isoprenoid biosynthesis; isopentenyl diphosphate biosynthesis via DXP pathway; isopentenyl diphosphate from 1-deoxy-D-xylulose 5-phosphate: step 2/6. Functionally, catalyzes the formation of 4-diphosphocytidyl-2-C-methyl-D-erythritol from CTP and 2-C-methyl-D-erythritol 4-phosphate (MEP). This chain is 2-C-methyl-D-erythritol 4-phosphate cytidylyltransferase, found in Burkholderia multivorans (strain ATCC 17616 / 249).